The primary structure comprises 203 residues: NADH-quinone oxidoreductase subunit C (203 aa).

The protein belongs to the complex I 30 kDa subunit family. NDH-1 is composed of 14 different subunits. Subunits NuoB, C, D, E, F, and G constitute the peripheral sector of the complex.

The protein localises to the cell inner membrane. The enzyme catalyses a quinone + NADH + 5 H(+)(in) = a quinol + NAD(+) + 4 H(+)(out). NDH-1 shuttles electrons from NADH, via FMN and iron-sulfur (Fe-S) centers, to quinones in the respiratory chain. The immediate electron acceptor for the enzyme in this species is believed to be ubiquinone. Couples the redox reaction to proton translocation (for every two electrons transferred, four hydrogen ions are translocated across the cytoplasmic membrane), and thus conserves the redox energy in a proton gradient. The polypeptide is NADH-quinone oxidoreductase subunit C (Bartonella tribocorum (strain CIP 105476 / IBS 506)).